The chain runs to 183 residues: Translation initiation factor IF-3 (183 aa).

The protein belongs to the IF-3 family. Monomer.

It is found in the cytoplasm. IF-3 binds to the 30S ribosomal subunit and shifts the equilibrium between 70S ribosomes and their 50S and 30S subunits in favor of the free subunits, thus enhancing the availability of 30S subunits on which protein synthesis initiation begins. The chain is Translation initiation factor IF-3 from Vibrio cholerae serotype O1 (strain ATCC 39315 / El Tor Inaba N16961).